Here is a 91-residue protein sequence, read N- to C-terminus: Probable Fe(2+)-trafficking protein (91 aa).

It belongs to the Fe(2+)-trafficking protein family.

In terms of biological role, could be a mediator in iron transactions between iron acquisition and iron-requiring processes, such as synthesis and/or repair of Fe-S clusters in biosynthetic enzymes. The protein is Probable Fe(2+)-trafficking protein of Actinobacillus pleuropneumoniae serotype 5b (strain L20).